Consider the following 618-residue polypeptide: Sulfite reductase [NADPH] flavoprotein alpha-component (618 aa).

Positions 64 to 202 constitute a Flavodoxin-like domain; sequence VTLISASQTG…QAQQWRQQVV (139 aa). FMN contacts are provided by residues 70 to 75, 117 to 120, and 153 to 162; these read SQTGNA, STQG, and LGDTSYEHFC. The FAD-binding FR-type domain maps to 253 to 467; that stretch reads TAPLTAQLSV…IEHNDNFRLP (215 aa). Residues Thr-341, Lys-375, 405 to 408, 423 to 425, Tyr-429, and 438 to 441 contribute to the FAD site; these read RLYS, TVG, and GGAS. NADP(+)-binding positions include 538–539, 544–548, and Asp-580; these read SR and KIYVQ. Position 618 (Tyr-618) interacts with FAD.

This sequence belongs to the NADPH-dependent sulphite reductase flavoprotein subunit CysJ family. It in the N-terminal section; belongs to the flavodoxin family. The protein in the C-terminal section; belongs to the flavoprotein pyridine nucleotide cytochrome reductase family. As to quaternary structure, alpha(8)-beta(8). The alpha component is a flavoprotein, the beta component is a hemoprotein. It depends on FAD as a cofactor. The cofactor is FMN.

It carries out the reaction hydrogen sulfide + 3 NADP(+) + 3 H2O = sulfite + 3 NADPH + 4 H(+). The protein operates within sulfur metabolism; hydrogen sulfide biosynthesis; hydrogen sulfide from sulfite (NADPH route): step 1/1. Its function is as follows. Component of the sulfite reductase complex that catalyzes the 6-electron reduction of sulfite to sulfide. This is one of several activities required for the biosynthesis of L-cysteine from sulfate. The flavoprotein component catalyzes the electron flow from NADPH -&gt; FAD -&gt; FMN to the hemoprotein component. The chain is Sulfite reductase [NADPH] flavoprotein alpha-component from Yersinia pseudotuberculosis serotype I (strain IP32953).